We begin with the raw amino-acid sequence, 501 residues long: Bifunctional pantoate ligase/cytidylate kinase (501 aa).

Positions 1–264 (MLSTQAELAA…CGTTRLIDHS (264 aa)) are pantoate--beta-alanine ligase. 25 to 32 (MGGLHQGH) serves as a coordination point for ATP. Residue histidine 32 is the Proton donor of the active site. A (R)-pantoate-binding site is contributed by glutamine 55. Glutamine 55 provides a ligand contact to beta-alanine. 144 to 147 (GEKD) provides a ligand contact to ATP. Position 150 (glutamine 150) interacts with (R)-pantoate. Residues valine 173 and 181–184 (LSSR) contribute to the ATP site. The interval 265-501 (FLMTRQPLVA…PEEAWPTPAG (237 aa)) is cytidylate kinase.

It in the N-terminal section; belongs to the pantothenate synthetase family. This sequence in the C-terminal section; belongs to the cytidylate kinase family. Type 1 subfamily.

The protein localises to the cytoplasm. It carries out the reaction (R)-pantoate + beta-alanine + ATP = (R)-pantothenate + AMP + diphosphate + H(+). It catalyses the reaction CMP + ATP = CDP + ADP. The catalysed reaction is dCMP + ATP = dCDP + ADP. The protein operates within cofactor biosynthesis; (R)-pantothenate biosynthesis; (R)-pantothenate from (R)-pantoate and beta-alanine: step 1/1. Functionally, catalyzes the condensation of pantoate with beta-alanine in an ATP-dependent reaction via a pantoyl-adenylate intermediate. In terms of biological role, catalyzes the transfer of a phosphate group from ATP to either CMP or dCMP to form CDP or dCDP and ADP, respectively. This Parasynechococcus marenigrum (strain WH8102) protein is Bifunctional pantoate ligase/cytidylate kinase.